Reading from the N-terminus, the 182-residue chain is ATP synthase subunit delta (182 aa).

The protein belongs to the ATPase delta chain family. In terms of assembly, F-type ATPases have 2 components, F(1) - the catalytic core - and F(0) - the membrane proton channel. F(1) has five subunits: alpha(3), beta(3), gamma(1), delta(1), epsilon(1). F(0) has three main subunits: a(1), b(2) and c(10-14). The alpha and beta chains form an alternating ring which encloses part of the gamma chain. F(1) is attached to F(0) by a central stalk formed by the gamma and epsilon chains, while a peripheral stalk is formed by the delta and b chains.

It is found in the cell membrane. With respect to regulation, increases 2-fold following exposure to low pH. In terms of biological role, f(1)F(0) ATP synthase produces ATP from ADP in the presence of a proton or sodium gradient. F-type ATPases consist of two structural domains, F(1) containing the extramembraneous catalytic core and F(0) containing the membrane proton channel, linked together by a central stalk and a peripheral stalk. During catalysis, ATP synthesis in the catalytic domain of F(1) is coupled via a rotary mechanism of the central stalk subunits to proton translocation. Functionally, this protein is part of the stalk that links CF(0) to CF(1). It either transmits conformational changes from CF(0) to CF(1) or is implicated in proton conduction. This is ATP synthase subunit delta from Lactobacillus acidophilus (strain ATCC 700396 / NCK56 / N2 / NCFM).